The sequence spans 188 residues: Elongation factor P (188 aa).

The residue at position 34 (lysine 34) is an N6-(3,6-diaminohexanoyl)-5-hydroxylysine.

The protein belongs to the elongation factor P family. In terms of processing, may be beta-lysylated on the epsilon-amino group of Lys-34 by the combined action of EpmA and EpmB, and then hydroxylated on the C5 position of the same residue by EpmC (if this protein is present). Lysylation is critical for the stimulatory effect of EF-P on peptide-bond formation. The lysylation moiety may extend toward the peptidyltransferase center and stabilize the terminal 3-CCA end of the tRNA. Hydroxylation of the C5 position on Lys-34 may allow additional potential stabilizing hydrogen-bond interactions with the P-tRNA.

It is found in the cytoplasm. It participates in protein biosynthesis; polypeptide chain elongation. Its function is as follows. Involved in peptide bond synthesis. Alleviates ribosome stalling that occurs when 3 or more consecutive Pro residues or the sequence PPG is present in a protein, possibly by augmenting the peptidyl transferase activity of the ribosome. Modification of Lys-34 is required for alleviation. The sequence is that of Elongation factor P from Pseudoalteromonas translucida (strain TAC 125).